A 61-amino-acid chain; its full sequence is Photosystem II reaction center protein K (61 aa).

The propeptide occupies 1 to 24 (MLNIFSLICICLNSVLYSSSFFVA). A helical membrane pass occupies residues 40–60 (MPVIPVLFFLLAFVWQAAVSF).

Belongs to the PsbK family. In terms of assembly, PSII is composed of 1 copy each of membrane proteins PsbA, PsbB, PsbC, PsbD, PsbE, PsbF, PsbH, PsbI, PsbJ, PsbK, PsbL, PsbM, PsbT, PsbX, PsbY, PsbZ, Psb30/Ycf12, at least 3 peripheral proteins of the oxygen-evolving complex and a large number of cofactors. It forms dimeric complexes.

The protein resides in the plastid. The protein localises to the chloroplast thylakoid membrane. Functionally, one of the components of the core complex of photosystem II (PSII). PSII is a light-driven water:plastoquinone oxidoreductase that uses light energy to abstract electrons from H(2)O, generating O(2) and a proton gradient subsequently used for ATP formation. It consists of a core antenna complex that captures photons, and an electron transfer chain that converts photonic excitation into a charge separation. In Morus indica (Mulberry), this protein is Photosystem II reaction center protein K.